We begin with the raw amino-acid sequence, 914 residues long: Protein GAMETE EXPRESSED 2 (914 aa).

2 Filamin repeats span residues 249 to 382 (IGYC…IKEV) and 391 to 485 (ACSV…DVNV). A helical transmembrane segment spans residues 893–913 (LVVVPFSFFSIKLFSLLMVLI).

In terms of tissue distribution, in tricellular pollen, expressed in mature sperm cells but not in the vegetative cell. In bicellular pollen, detected in the progenitor generative cell. Detected in the egg cell within the female gametophyte.

The protein resides in the cell membrane. The polypeptide is Protein GAMETE EXPRESSED 2 (GEX2) (Arabidopsis thaliana (Mouse-ear cress)).